The sequence spans 90 residues: Large ribosomal subunit protein bL27 (90 aa).

The interval Met-1–Leu-21 is disordered.

It belongs to the bacterial ribosomal protein bL27 family.

This chain is Large ribosomal subunit protein bL27, found in Neisseria gonorrhoeae (strain ATCC 700825 / FA 1090).